A 476-amino-acid chain; its full sequence is Amino acid permease 3 (476 aa).

The Cytoplasmic segment spans residues 1–33 (MVQNHQTVLAVDMPQTGGSKYLDDDGKNKRTGS). A helical transmembrane segment spans residues 34-54 (VWTASAHIITAVIGSGVLSLA). Topologically, residues 55–57 (WAT) are extracellular. Residues 58–78 (AQLGWLAGPVVMLLFSAVTYF) form a helical membrane-spanning segment. Topologically, residues 79-122 (TSSLLAACYRSGDPISGKRNYTYMDAVRSNLGGVKVTLCGIVQY) are cytoplasmic. A helical transmembrane segment spans residues 123–143 (LNIFGVAIGYTIASAISMMAI). The Extracellular portion of the chain corresponds to 144–166 (KRSNCFHKSGGKDPCHMNSNPYM). 2 helical membrane passes run 167–187 (IAFG…QLWW) and 188–208 (LSIL…ALGI). At 209–277 (AQVVVNGKVK…EEKTMKKATL (69 aa)) the chain is on the extracellular side. The helical transmembrane segment at 278-298 (VSVSVTTMFYMLCGCMGYAAF) threads the bilayer. Residues 299 to 300 (GD) are Cytoplasmic-facing. A helical membrane pass occupies residues 301 to 321 (LSPGNLLTGFGFYNPYWLLDI). The Extracellular portion of the chain corresponds to 322-324 (ANA). A helical transmembrane segment spans residues 325-345 (AIVIHLIGAYQVYCQPLFAFI). The Cytoplasmic portion of the chain corresponds to 346–384 (EKQASIQFPDSEFIAKDIKIPIPGFKPLRLNVFRLIWRT). A run of 2 helical transmembrane segments spans residues 385–405 (VFVI…DVVG) and 406–426 (LLGA…MYIA). Over 427-441 (QKKIPRWSTRWVCLQ) the chain is Cytoplasmic. The chain crosses the membrane as a helical span at residues 442–462 (VFSLGCLVVSIAAAAGSIAGV). Residues 463–476 (LLDLKSYKPFRSEY) are Extracellular-facing.

This sequence belongs to the amino acid/polyamine transporter 2 family. Amino acid/auxin permease (AAAP) (TC 2.A.18.2) subfamily. As to expression, expressed in the root phloem. Detected in stamens, in cotyledons, and in major veins of mature leaves.

It is found in the cell membrane. Its subcellular location is the nucleus membrane. The protein resides in the endomembrane system. With respect to regulation, inhibited by carbonylcyanide m-chlorophenylhydrazone and 2,4-dinitrophenol. Amino acid-proton symporter. Stereospecific transporter with a broad specificity for GABA, tryptophan and both neutral and basic amino acids. High affinity transport of cationic amino acids. The sequence is that of Amino acid permease 3 (AAP3) from Arabidopsis thaliana (Mouse-ear cress).